A 545-amino-acid polypeptide reads, in one-letter code: Bifunctional purine biosynthesis protein PurH (545 aa).

The MGS-like domain maps to 1–150 (MTNTNRPIRR…KNHATVAIVT (150 aa)).

The protein belongs to the PurH family.

The enzyme catalyses (6R)-10-formyltetrahydrofolate + 5-amino-1-(5-phospho-beta-D-ribosyl)imidazole-4-carboxamide = 5-formamido-1-(5-phospho-D-ribosyl)imidazole-4-carboxamide + (6S)-5,6,7,8-tetrahydrofolate. It carries out the reaction IMP + H2O = 5-formamido-1-(5-phospho-D-ribosyl)imidazole-4-carboxamide. The protein operates within purine metabolism; IMP biosynthesis via de novo pathway; 5-formamido-1-(5-phospho-D-ribosyl)imidazole-4-carboxamide from 5-amino-1-(5-phospho-D-ribosyl)imidazole-4-carboxamide (10-formyl THF route): step 1/1. It functions in the pathway purine metabolism; IMP biosynthesis via de novo pathway; IMP from 5-formamido-1-(5-phospho-D-ribosyl)imidazole-4-carboxamide: step 1/1. This chain is Bifunctional purine biosynthesis protein PurH, found in Bifidobacterium longum (strain DJO10A).